The following is a 245-amino-acid chain: Ribonuclease 3 (245 aa).

The RNase III domain maps to 19-144 (ASILEERTGH…LIATIYLDGG (126 aa)). E57 contributes to the Mg(2+) binding site. Residue D61 is part of the active site. Residues D130 and E133 each coordinate Mg(2+). The active site involves E133. Residues 169-238 (DAKTELQEWA…AEAMLYREGV (70 aa)) enclose the DRBM domain.

It belongs to the ribonuclease III family. Homodimer. Mg(2+) serves as cofactor.

It localises to the cytoplasm. It catalyses the reaction Endonucleolytic cleavage to 5'-phosphomonoester.. Functionally, digests double-stranded RNA. Involved in the processing of primary rRNA transcript to yield the immediate precursors to the large and small rRNAs (23S and 16S). Processes some mRNAs, and tRNAs when they are encoded in the rRNA operon. Processes pre-crRNA and tracrRNA of type II CRISPR loci if present in the organism. The sequence is that of Ribonuclease 3 from Brucella abortus (strain S19).